The sequence spans 30 residues: Uperin-6.1 (30 aa).

As to expression, expressed by the skin dorsal glands.

It is found in the secreted. This Uperoleia inundata (Floodplain toadlet) protein is Uperin-6.1.